We begin with the raw amino-acid sequence, 128 residues long: Glycoprotein hormone alpha-2 (128 aa).

The signal sequence occupies residues 1 to 20 (MPMAPRVLLLCLLGLAVTEG). Intrachain disulfides connect C30–C88, C47–C102, C56–C118, and C60–C120. N36 and N80 each carry an N-linked (GlcNAc...) asparagine glycan.

This sequence belongs to the glycoprotein hormones subunit alpha family. Heterodimer with GPHB5; this heterodimer interacts with thyroid-stimulating hormone receptor (TSHR), and hence stimulates cAMP production.

It localises to the secreted. Functions as a heterodimeric glycoprotein hormone with GPHB5 able to bind and activate the thyroid-stimulating hormone receptor (TSHR), leading to increased cAMP production. Plays a central role in controlling thyroid cell metabolism. The polypeptide is Glycoprotein hormone alpha-2 (Gpha2) (Mus musculus (Mouse)).